The primary structure comprises 172 residues: uncharacterized protein (172 aa).

This is an uncharacterized protein from Agrobacterium tumefaciens (strain Ach5).